The sequence spans 283 residues: ATP phosphoribosyltransferase (283 aa).

This sequence belongs to the ATP phosphoribosyltransferase family. Long subfamily. Mg(2+) serves as cofactor.

The protein resides in the cytoplasm. It catalyses the reaction 1-(5-phospho-beta-D-ribosyl)-ATP + diphosphate = 5-phospho-alpha-D-ribose 1-diphosphate + ATP. It participates in amino-acid biosynthesis; L-histidine biosynthesis; L-histidine from 5-phospho-alpha-D-ribose 1-diphosphate: step 1/9. Feedback inhibited by histidine. Functionally, catalyzes the condensation of ATP and 5-phosphoribose 1-diphosphate to form N'-(5'-phosphoribosyl)-ATP (PR-ATP). Has a crucial role in the pathway because the rate of histidine biosynthesis seems to be controlled primarily by regulation of HisG enzymatic activity. In Rhodococcus opacus (strain B4), this protein is ATP phosphoribosyltransferase.